An 844-amino-acid polypeptide reads, in one-letter code: Leucine--tRNA ligase (844 aa).

Residues 39–49 (PYPSGRIHMGH) carry the 'HIGH' region motif. Residues 621–625 (KMSKS) carry the 'KMSKS' region motif. Lys624 contributes to the ATP binding site.

The protein belongs to the class-I aminoacyl-tRNA synthetase family.

The protein resides in the cytoplasm. It catalyses the reaction tRNA(Leu) + L-leucine + ATP = L-leucyl-tRNA(Leu) + AMP + diphosphate. This is Leucine--tRNA ligase from Paracoccus denitrificans (strain Pd 1222).